Consider the following 144-residue polypeptide: Maximins 3/H14 (144 aa).

A signal peptide spans 1 to 18 (MNFKYIVAVSFLIASAYA). 2 consecutive propeptides follow at residues 19–43 (RSVQNDEQSLSQRDVLEEESLREIR) and 73–122 (RTAE…KKEK). Isoleucine 143 carries the isoleucine amide modification.

The protein belongs to the bombinin family. Expressed by the skin glands.

The protein resides in the secreted. In terms of biological role, maximin-3 shows antibacterial activity against both Gram-positive and Gram-negative bacteria. It also shows antimicrobial activity against the fungus C.albicans, but not against A.flavus nor P.uticale. It has little hemolytic activity. It possess a significant cytotoxicity against tumor cell lines. It possess a significant anti-HIV activity. It shows high spermicidal activity. Its function is as follows. Maximin-H14 shows antimicrobial activity against bacteria and against the fungus C.albicans. Shows strong hemolytic activity. This is Maximins 3/H14 from Bombina maxima (Giant fire-bellied toad).